A 195-amino-acid chain; its full sequence is HTH-type transcriptional regulator BetI (195 aa).

One can recognise an HTH tetR-type domain in the interval 8 to 68 (SIRRRQLIDA…ATMRDITSQL (61 aa)). The H-T-H motif DNA-binding region spans 31 to 50 (TIAQIARRAGVSTGIISHYF).

It functions in the pathway amine and polyamine biosynthesis; betaine biosynthesis via choline pathway [regulation]. In terms of biological role, repressor involved in the biosynthesis of the osmoprotectant glycine betaine. It represses transcription of the choline transporter BetT and the genes of BetAB involved in the synthesis of glycine betaine. This is HTH-type transcriptional regulator BetI from Escherichia coli O8 (strain IAI1).